A 146-amino-acid chain; its full sequence is Protein SprT-like (146 aa).

The SprT-like domain maps to 6-141 (YVKTVSIEDF…GCGLCQGKLI (136 aa)). H64 contacts Zn(2+). E65 is an active-site residue. Residue H68 participates in Zn(2+) binding.

Belongs to the SprT family. The cofactor is Zn(2+).

It localises to the cytoplasm. In Streptococcus thermophilus (strain CNRZ 1066), this protein is Protein SprT-like.